A 709-amino-acid polypeptide reads, in one-letter code: Polyribonucleotide nucleotidyltransferase (709 aa).

Mg(2+) contacts are provided by Asp491 and Asp497. The region spanning 557–617 (PKSESFMIPP…ENLQKAKTFI (61 aa)) is the KH domain. The S1 motif domain occupies 641–709 (GERFVGKIKK…KNKVELGLVE (69 aa)).

This sequence belongs to the polyribonucleotide nucleotidyltransferase family. Mg(2+) serves as cofactor.

It localises to the cytoplasm. The enzyme catalyses RNA(n+1) + phosphate = RNA(n) + a ribonucleoside 5'-diphosphate. Involved in mRNA degradation. Catalyzes the phosphorolysis of single-stranded polyribonucleotides processively in the 3'- to 5'-direction. This is Polyribonucleotide nucleotidyltransferase from Helicobacter hepaticus (strain ATCC 51449 / 3B1).